Here is a 278-residue protein sequence, read N- to C-terminus: Ribosomal RNA small subunit methyltransferase J (278 aa).

Residues 143–144 (ER) and Asp197 each bind S-adenosyl-L-methionine.

It belongs to the methyltransferase superfamily. RsmJ family.

Its subcellular location is the cytoplasm. The catalysed reaction is guanosine(1516) in 16S rRNA + S-adenosyl-L-methionine = N(2)-methylguanosine(1516) in 16S rRNA + S-adenosyl-L-homocysteine + H(+). Specifically methylates the guanosine in position 1516 of 16S rRNA. The sequence is that of Ribosomal RNA small subunit methyltransferase J from Marinobacter nauticus (strain ATCC 700491 / DSM 11845 / VT8) (Marinobacter aquaeolei).